The chain runs to 420 residues: Tyrosine--tRNA ligase (420 aa).

Y33 is a binding site for L-tyrosine. A 'HIGH' region motif is present at residues 38 to 47 (PTADSLHVGH). The L-tyrosine site is built by Y167 and Q171. The 'KMSKS' region signature appears at 227 to 231 (KFGKT). K230 contributes to the ATP binding site. Residues 353 to 419 (LTVADLLVKV…GKRNYALVKV (67 aa)) form the S4 RNA-binding domain.

It belongs to the class-I aminoacyl-tRNA synthetase family. TyrS type 1 subfamily. In terms of assembly, homodimer.

Its subcellular location is the cytoplasm. It catalyses the reaction tRNA(Tyr) + L-tyrosine + ATP = L-tyrosyl-tRNA(Tyr) + AMP + diphosphate + H(+). Catalyzes the attachment of tyrosine to tRNA(Tyr) in a two-step reaction: tyrosine is first activated by ATP to form Tyr-AMP and then transferred to the acceptor end of tRNA(Tyr). The polypeptide is Tyrosine--tRNA ligase (Anaeromyxobacter dehalogenans (strain 2CP-C)).